A 621-amino-acid polypeptide reads, in one-letter code: MNGATPGSAAAPAPVPDWRQFCELHAQVAAVDFAHKFCRFLRDNPTYDTPDAGTSFSRHFAANFLAVFSEEVRRVLGTAADTMEPEPAVTSVTSALKTATYGHSRSSEDVSAHVATKARVRKGFSLRNMSLCVVDGVRDLWHRRASPEPEGGATPKTTEPVSEPRDKWTRRLRLARTLAAKVELVDIQREGALRFMVADDAASGPGGTAQWQKCRLLLRRAVAGERFRLEFFVPPKASRPKVSIPLSAIIEVRTTMPLEMPEKDNTFVLKVENGAEYILETIDSLQKHSWVADIQGCVDPGDSEEDTGLSCARGGCLASRVTSCSCELLTEADMPRPPETMTAVGAVVTAPHGRARDTVGESLAHVPLETFLQTLESSGGVSESNNTGDEGAELDPDAEAELELSDYPWFHGTLSRVKAAQLVLAGGPRSHGLFVIRQSETRPGECVLTFNFQGKAKHLRLSLNGHGQCHVQHLWFQSVFDMLRHFHTHPIPLESGGSADITLRSYVRAQGPPPDPGPAPNTAAPVPACWTEPAGQHYFSSLATATCPPTSPSNGAGASSSSGSSSSATSVPPRPAEGPLSARSRSNSTEHLLEAASGATEEPADATLGRARAVENQYSFY.

Y47 is modified (phosphotyrosine). Position 130 is a phosphoserine (S130). The disordered stretch occupies residues 144-165 (RASPEPEGGATPKTTEPVSEPR). Positions 186 to 299 (DIQREGALRF…WVADIQGCVD (114 aa)) constitute a PH domain. Position 303 is a phosphoserine (S303). The SH2 domain maps to 409-507 (WFHGTLSRVK…SADITLRSYV (99 aa)). Disordered stretches follow at residues 507–528 (VRAQ…PVPA) and 548–609 (PPTS…ATLG). Residues 552 to 570 (PSNGAGASSSSGSSSSATS) show a composition bias toward low complexity. S597 is modified (phosphoserine). Y618 carries the post-translational modification Phosphotyrosine.

It belongs to the SH2B adapter family. Homodimer. Interacts with KIT/c-KIT, SHC1, EPOR, PDGFR, VAV1 and VAV3. Interacts (via N-terminal region) with SHC1. Interacts (via the phosphorylated C-terminus) with GRB2. Interacts (via its SH2 domain) with EPOR, INSR and KIT. Interacts with GRB2 after B-cell antigen receptor stimulation. Interacts (via PH domain) with VAV3. Interacts with NTRK1, NTRK2 and NTRK3 (phosphorylated); after stimulation of the receptor by its extracellular ligand and subsequent autophosphorylation of the receptor. Binds INSR, GRB2, ASB6 and CAP. Insulin stimulation leads to dissociation of CAP. Binds CBS only when SH2B2/APS has become phosphorylated. INSR binding does not depend on the phosphorylation of SH2B2/APS. Post-translationally, phosphorylated on a tyrosine residue by NTRK1, NTRK2, NTRK3 and INSR after stimulation of the receptor by its extracellular ligand. Tyrosine phosphorylated by JAK2, KIT and other kinases activated by B-cell receptor in response to stimulation with cytokines, IL3, IL5, PDGF, IGF1, IGF2, CSF2/GM-CSF and cross-linking of the B-cell receptor complex. As to expression, detected in embryonic brain, spinal cord and cortical neurons.

Its subcellular location is the cytoplasm. The protein resides in the membrane. In terms of biological role, adapter protein for several members of the tyrosine kinase receptor family. Involved in multiple signaling pathways. Binds to EPOR and suppresses EPO-induced STAT5 activation, possibly through a masking effect on STAT5 docking sites in EPOR. Suppresses PDGF-induced mitogenesis. Involved in stimulation of glucose uptake by insulin. Involved in coupling from immunoreceptor to Ras signaling. Acts as a negative regulator of cytokine signaling in collaboration with CBL. Induces cytoskeletal reorganization and neurite outgrowth in cultured neurons. The chain is SH2B adapter protein 2 (Sh2b2) from Rattus norvegicus (Rat).